The chain runs to 89 residues: Small ribosomal subunit protein uS15 (89 aa).

It belongs to the universal ribosomal protein uS15 family. As to quaternary structure, part of the 30S ribosomal subunit. Forms a bridge to the 50S subunit in the 70S ribosome, contacting the 23S rRNA.

Functionally, one of the primary rRNA binding proteins, it binds directly to 16S rRNA where it helps nucleate assembly of the platform of the 30S subunit by binding and bridging several RNA helices of the 16S rRNA. Forms an intersubunit bridge (bridge B4) with the 23S rRNA of the 50S subunit in the ribosome. In Granulibacter bethesdensis (strain ATCC BAA-1260 / CGDNIH1), this protein is Small ribosomal subunit protein uS15.